A 455-amino-acid polypeptide reads, in one-letter code: Bifunctional protein GlmU (455 aa).

A pyrophosphorylase region spans residues 1–226; the sequence is MSLDIVILAA…AMEVQGANDR (226 aa). Residues 8–11, K22, Q73, 78–79, 99–101, G136, E151, N166, and N224 contribute to the UDP-N-acetyl-alpha-D-glucosamine site; these read LAAG, GT, and YGD. Residue D101 coordinates Mg(2+). Residue N224 coordinates Mg(2+). Positions 227-247 are linker; that stretch reads KQLSELERHYQLREARRLMAG. The interval 248–455 is N-acetyltransferase; it reads GVTLRDPARF…WKRPVKIRKD (208 aa). Residues R330 and K348 each contribute to the UDP-N-acetyl-alpha-D-glucosamine site. Catalysis depends on H360, which acts as the Proton acceptor. 2 residues coordinate UDP-N-acetyl-alpha-D-glucosamine: Y363 and N374. Acetyl-CoA-binding positions include A377, 383 to 384, S402, A420, and R437; that span reads NY.

It in the N-terminal section; belongs to the N-acetylglucosamine-1-phosphate uridyltransferase family. In the C-terminal section; belongs to the transferase hexapeptide repeat family. Homotrimer. Mg(2+) is required as a cofactor.

It is found in the cytoplasm. It catalyses the reaction alpha-D-glucosamine 1-phosphate + acetyl-CoA = N-acetyl-alpha-D-glucosamine 1-phosphate + CoA + H(+). The catalysed reaction is N-acetyl-alpha-D-glucosamine 1-phosphate + UTP + H(+) = UDP-N-acetyl-alpha-D-glucosamine + diphosphate. The protein operates within nucleotide-sugar biosynthesis; UDP-N-acetyl-alpha-D-glucosamine biosynthesis; N-acetyl-alpha-D-glucosamine 1-phosphate from alpha-D-glucosamine 6-phosphate (route II): step 2/2. It functions in the pathway nucleotide-sugar biosynthesis; UDP-N-acetyl-alpha-D-glucosamine biosynthesis; UDP-N-acetyl-alpha-D-glucosamine from N-acetyl-alpha-D-glucosamine 1-phosphate: step 1/1. Its pathway is bacterial outer membrane biogenesis; LPS lipid A biosynthesis. Catalyzes the last two sequential reactions in the de novo biosynthetic pathway for UDP-N-acetylglucosamine (UDP-GlcNAc). The C-terminal domain catalyzes the transfer of acetyl group from acetyl coenzyme A to glucosamine-1-phosphate (GlcN-1-P) to produce N-acetylglucosamine-1-phosphate (GlcNAc-1-P), which is converted into UDP-GlcNAc by the transfer of uridine 5-monophosphate (from uridine 5-triphosphate), a reaction catalyzed by the N-terminal domain. The chain is Bifunctional protein GlmU from Pseudomonas savastanoi pv. phaseolicola (strain 1448A / Race 6) (Pseudomonas syringae pv. phaseolicola (strain 1448A / Race 6)).